A 388-amino-acid polypeptide reads, in one-letter code: tRNA(Ile)-lysidine synthase (388 aa).

ATP is bound at residue 51 to 56 (SGGRDS).

It belongs to the tRNA(Ile)-lysidine synthase family.

The protein localises to the cytoplasm. The enzyme catalyses cytidine(34) in tRNA(Ile2) + L-lysine + ATP = lysidine(34) in tRNA(Ile2) + AMP + diphosphate + H(+). Its function is as follows. Ligates lysine onto the cytidine present at position 34 of the AUA codon-specific tRNA(Ile) that contains the anticodon CAU, in an ATP-dependent manner. Cytidine is converted to lysidine, thus changing the amino acid specificity of the tRNA from methionine to isoleucine. In Bifidobacterium longum (strain NCC 2705), this protein is tRNA(Ile)-lysidine synthase.